Here is a 1409-residue protein sequence, read N- to C-terminus: DNA-directed RNA polymerase subunit beta' (1409 aa).

Zn(2+) contacts are provided by cysteine 70, cysteine 72, cysteine 85, and cysteine 88. Positions 458, 460, and 462 each coordinate Mg(2+). Zn(2+) contacts are provided by cysteine 813, cysteine 887, cysteine 894, and cysteine 897. Residues glutamate 1385–serine 1403 are compositionally biased toward low complexity. The disordered stretch occupies residues glutamate 1385–glutamate 1409.

This sequence belongs to the RNA polymerase beta' chain family. As to quaternary structure, the RNAP catalytic core consists of 2 alpha, 1 beta, 1 beta' and 1 omega subunit. When a sigma factor is associated with the core the holoenzyme is formed, which can initiate transcription. Mg(2+) is required as a cofactor. Zn(2+) serves as cofactor.

It carries out the reaction RNA(n) + a ribonucleoside 5'-triphosphate = RNA(n+1) + diphosphate. DNA-dependent RNA polymerase catalyzes the transcription of DNA into RNA using the four ribonucleoside triphosphates as substrates. This chain is DNA-directed RNA polymerase subunit beta', found in Variovorax paradoxus (strain S110).